A 433-amino-acid chain; its full sequence is C2H2 type master regulator of conidiophore development brlA (433 aa).

3 disordered regions span residues 24-49 (SDCP…LYSQ), 240-269 (KSHT…ISGH), and 286-306 (MMQR…LRSN). Positions 30–49 (TSSFSPLDSPTPTPTSLYSQ) are enriched in low complexity. Residues 240 to 264 (KSHTPSTPHRSVSMGTPSGSDTPVS) are compositionally biased toward polar residues. A compositionally biased stretch (basic residues) spans 288 to 302 (QRHRQPSRKPSKKQL). 2 C2H2-type zinc fingers span residues 321–345 (FKCK…MKSH) and 351–376 (HVCW…TKTH). The segment at 391–423 (ETSQDFDPDFRGQLTPDGRPIYGSKLEDSMPDC) is disordered.

It is found in the nucleus. BrlA, abaA and wetA are pivotal regulators of conidiophore development and conidium maturation. They act individually and together to regulate their own expression and that of numerous other sporulation-specific genes. Binds promoters of target genes at brlA response elements (BREs) containing the conserved sequence 5'-(C/A)(A/G)AGGG(G/A)-3'. Regulates genes involved in conidiogenesis. The protein is C2H2 type master regulator of conidiophore development brlA of Penicillium digitatum (strain PHI26 / CECT 20796) (Green mold).